We begin with the raw amino-acid sequence, 310 residues long: Malate dehydrogenase (310 aa).

Residues 7-13 (GAAGGIG) and Asp-34 contribute to the NAD(+) site. Substrate-binding residues include Arg-81 and Arg-87. NAD(+)-binding positions include Asn-94 and 117–119 (ITN). Positions 119 and 153 each coordinate substrate. His-177 serves as the catalytic Proton acceptor. Residue Met-227 coordinates NAD(+).

It belongs to the LDH/MDH superfamily. MDH type 1 family. In terms of assembly, homodimer.

It carries out the reaction (S)-malate + NAD(+) = oxaloacetate + NADH + H(+). Its function is as follows. Catalyzes the reversible oxidation of malate to oxaloacetate. The sequence is that of Malate dehydrogenase from Vibrio vulnificus (strain YJ016).